The chain runs to 276 residues: Formamidopyrimidine-DNA glycosylase (276 aa).

Pro2 acts as the Schiff-base intermediate with DNA in catalysis. Glu3 functions as the Proton donor in the catalytic mechanism. Lys58 serves as the catalytic Proton donor; for beta-elimination activity. Residues His94, Arg112, and Arg157 each coordinate DNA. The FPG-type zinc finger occupies 242-276 (FVYDRAGLPCRVCGTPIKQIVQGQRSTYFCPTCQR). Arg266 functions as the Proton donor; for delta-elimination activity in the catalytic mechanism.

This sequence belongs to the FPG family. As to quaternary structure, monomer. Requires Zn(2+) as cofactor.

The enzyme catalyses Hydrolysis of DNA containing ring-opened 7-methylguanine residues, releasing 2,6-diamino-4-hydroxy-5-(N-methyl)formamidopyrimidine.. It catalyses the reaction 2'-deoxyribonucleotide-(2'-deoxyribose 5'-phosphate)-2'-deoxyribonucleotide-DNA = a 3'-end 2'-deoxyribonucleotide-(2,3-dehydro-2,3-deoxyribose 5'-phosphate)-DNA + a 5'-end 5'-phospho-2'-deoxyribonucleoside-DNA + H(+). Involved in base excision repair of DNA damaged by oxidation or by mutagenic agents. Acts as a DNA glycosylase that recognizes and removes damaged bases. Has a preference for oxidized purines, such as 7,8-dihydro-8-oxoguanine (8-oxoG). Has AP (apurinic/apyrimidinic) lyase activity and introduces nicks in the DNA strand. Cleaves the DNA backbone by beta-delta elimination to generate a single-strand break at the site of the removed base with both 3'- and 5'-phosphates. This is Formamidopyrimidine-DNA glycosylase from Paraburkholderia phytofirmans (strain DSM 17436 / LMG 22146 / PsJN) (Burkholderia phytofirmans).